Here is a 309-residue protein sequence, read N- to C-terminus: Ornithine carbamoyltransferase (309 aa).

Residues 51–54 (STRT), Gln-78, Arg-102, and 129–132 (HPVQ) contribute to the carbamoyl phosphate site. L-ornithine is bound by residues Asn-159, Asp-223, and 227-228 (SM). Carbamoyl phosphate is bound by residues 263 to 264 (CL) and Arg-291.

The protein belongs to the aspartate/ornithine carbamoyltransferase superfamily. OTCase family.

It localises to the cytoplasm. The enzyme catalyses carbamoyl phosphate + L-ornithine = L-citrulline + phosphate + H(+). It participates in amino-acid biosynthesis; L-arginine biosynthesis; L-arginine from L-ornithine and carbamoyl phosphate: step 1/3. Reversibly catalyzes the transfer of the carbamoyl group from carbamoyl phosphate (CP) to the N(epsilon) atom of ornithine (ORN) to produce L-citrulline. In Nitratiruptor sp. (strain SB155-2), this protein is Ornithine carbamoyltransferase.